A 171-amino-acid polypeptide reads, in one-letter code: Probable chemoreceptor glutamine deamidase CheD 1 (171 aa).

A compositionally biased stretch (low complexity) spans 1–18 (MTRTTGAAPDRAAPAAGE). The disordered stretch occupies residues 1-23 (MTRTTGAAPDRAAPAAGETPGGG).

It belongs to the CheD family.

The enzyme catalyses L-glutaminyl-[protein] + H2O = L-glutamyl-[protein] + NH4(+). Probably deamidates glutamine residues to glutamate on methyl-accepting chemotaxis receptors (MCPs), playing an important role in chemotaxis. The protein is Probable chemoreceptor glutamine deamidase CheD 1 of Anaeromyxobacter dehalogenans (strain 2CP-C).